The sequence spans 205 residues: Beta-crystallin B2 (205 aa).

The residue at position 2 (alanine 2) is an N-acetylalanine. The segment at alanine 2 to asparagine 16 is N-terminal arm. 2 consecutive Beta/gamma crystallin 'Greek key' domains span residues proline 17–alanine 56 and glycine 57–lysine 101. Residues valine 102 to glutamate 106 are connecting peptide. 2 consecutive Beta/gamma crystallin 'Greek key' domains span residues histidine 107–serine 148 and glycine 149–arginine 191. Positions methionine 193–serine 205 are C-terminal arm.

Belongs to the beta/gamma-crystallin family. Homo/heterodimer, or complexes of higher-order. The structure of beta-crystallin oligomers seems to be stabilized through interactions between the N-terminal arms.

In terms of biological role, crystallins are the dominant structural components of the vertebrate eye lens. This chain is Beta-crystallin B2 (CRYBB2), found in Mesocricetus auratus (Golden hamster).